We begin with the raw amino-acid sequence, 158 residues long: NAD(P)H-quinone oxidoreductase subunit J, chloroplastic (158 aa).

It belongs to the complex I 30 kDa subunit family. In terms of assembly, NDH is composed of at least 16 different subunits, 5 of which are encoded in the nucleus.

Its subcellular location is the plastid. The protein resides in the chloroplast thylakoid membrane. It carries out the reaction a plastoquinone + NADH + (n+1) H(+)(in) = a plastoquinol + NAD(+) + n H(+)(out). It catalyses the reaction a plastoquinone + NADPH + (n+1) H(+)(in) = a plastoquinol + NADP(+) + n H(+)(out). In terms of biological role, NDH shuttles electrons from NAD(P)H:plastoquinone, via FMN and iron-sulfur (Fe-S) centers, to quinones in the photosynthetic chain and possibly in a chloroplast respiratory chain. The immediate electron acceptor for the enzyme in this species is believed to be plastoquinone. Couples the redox reaction to proton translocation, and thus conserves the redox energy in a proton gradient. The protein is NAD(P)H-quinone oxidoreductase subunit J, chloroplastic of Cicer arietinum (Chickpea).